The following is a 305-amino-acid chain: UDP-3-O-acyl-N-acetylglucosamine deacetylase (305 aa).

Zn(2+) is bound by residues His79, His238, and Asp242. His265 (proton donor) is an active-site residue.

Belongs to the LpxC family. Requires Zn(2+) as cofactor.

It carries out the reaction a UDP-3-O-[(3R)-3-hydroxyacyl]-N-acetyl-alpha-D-glucosamine + H2O = a UDP-3-O-[(3R)-3-hydroxyacyl]-alpha-D-glucosamine + acetate. The protein operates within glycolipid biosynthesis; lipid IV(A) biosynthesis; lipid IV(A) from (3R)-3-hydroxytetradecanoyl-[acyl-carrier-protein] and UDP-N-acetyl-alpha-D-glucosamine: step 2/6. In terms of biological role, catalyzes the hydrolysis of UDP-3-O-myristoyl-N-acetylglucosamine to form UDP-3-O-myristoylglucosamine and acetate, the committed step in lipid A biosynthesis. The protein is UDP-3-O-acyl-N-acetylglucosamine deacetylase of Edwardsiella ictaluri (strain 93-146).